The chain runs to 129 residues: MAALSNEQIIEAIRGKTILELSELIKAVEEEFGVTAAVPVAPVAEGGGAGSVAAEEQTEFTVVLKGLAEPGKKIAVIKEVRNVISGLGLKEAKDLVEGAPKTLKENVSKEEAAKIKESMTAAGALIEIS.

The protein belongs to the bacterial ribosomal protein bL12 family. As to quaternary structure, homodimer. Part of the ribosomal stalk of the 50S ribosomal subunit. Forms a multimeric L10(L12)X complex, where L10 forms an elongated spine to which 2 to 4 L12 dimers bind in a sequential fashion. Binds GTP-bound translation factors.

In terms of biological role, forms part of the ribosomal stalk which helps the ribosome interact with GTP-bound translation factors. Is thus essential for accurate translation. This is Large ribosomal subunit protein bL12 from Treponema pallidum (strain Nichols).